The primary structure comprises 1002 residues: UPF0182 protein Mvan_1814 (1002 aa).

A run of 7 helical transmembrane segments spans residues 16–36 (VMIA…RLVD), 61–81 (LLLF…AMAL), 112–132 (LVGI…AQNY), 174–194 (FAAT…FGGI), 209–229 (IQLI…YWLD), 258–278 (KLIL…AIVL), and 286–306 (IGVV…PLVV). Residues 891 to 958 (LFGPGADATA…TGPTQLSAGK (68 aa)) form a disordered region. Residues 893–923 (GPGADATATGPAATEPPAGQAPQPQGNNQPP) show a composition bias toward low complexity. Positions 937–950 (PQQPEVPVAVPPTG) are enriched in pro residues.

Belongs to the UPF0182 family.

The protein resides in the cell membrane. This is UPF0182 protein Mvan_1814 from Mycolicibacterium vanbaalenii (strain DSM 7251 / JCM 13017 / BCRC 16820 / KCTC 9966 / NRRL B-24157 / PYR-1) (Mycobacterium vanbaalenii).